Consider the following 227-residue polypeptide: Phosphoglycolate phosphatase (227 aa).

D8 acts as the Nucleophile in catalysis. Mg(2+)-binding residues include D8 and D10. Substrate is bound at residue K152. Mg(2+) contacts are provided by D175 and D179.

It belongs to the archaeal SPP-like hydrolase family. It depends on Mg(2+) as a cofactor.

It catalyses the reaction 2-phosphoglycolate + H2O = glycolate + phosphate. Its function is as follows. Catalyzes the dephosphorylation of 2-phosphoglycolate. The protein is Phosphoglycolate phosphatase of Halorubrum lacusprofundi (strain ATCC 49239 / DSM 5036 / JCM 8891 / ACAM 34).